We begin with the raw amino-acid sequence, 342 residues long: Dihydroorotase (342 aa).

2 residues coordinate Zn(2+): His-13 and His-15. Substrate is bound by residues 15-17 (HLR) and Asn-41. Residues Lys-98, His-135, and His-173 each contribute to the Zn(2+) site. Lys-98 is subject to N6-carboxylysine. A substrate-binding site is contributed by His-135. Leu-218 is a binding site for substrate. Residue Asp-246 participates in Zn(2+) binding. Asp-246 is a catalytic residue. Substrate-binding residues include His-250 and Ala-262.

The protein belongs to the metallo-dependent hydrolases superfamily. DHOase family. Class II DHOase subfamily. Homodimer. Zn(2+) serves as cofactor.

It carries out the reaction (S)-dihydroorotate + H2O = N-carbamoyl-L-aspartate + H(+). It functions in the pathway pyrimidine metabolism; UMP biosynthesis via de novo pathway; (S)-dihydroorotate from bicarbonate: step 3/3. In terms of biological role, catalyzes the reversible cyclization of carbamoyl aspartate to dihydroorotate. The sequence is that of Dihydroorotase from Aliivibrio salmonicida (strain LFI1238) (Vibrio salmonicida (strain LFI1238)).